A 190-amino-acid chain; its full sequence is Molybdenum cofactor guanylyltransferase (190 aa).

GTP is bound by residues 8–10 (LAG), lysine 20, aspartate 64, and aspartate 98. Aspartate 98 is a binding site for Mg(2+).

This sequence belongs to the MobA family. As to quaternary structure, monomer. Mg(2+) serves as cofactor.

Its subcellular location is the cytoplasm. The enzyme catalyses Mo-molybdopterin + GTP + H(+) = Mo-molybdopterin guanine dinucleotide + diphosphate. In terms of biological role, transfers a GMP moiety from GTP to Mo-molybdopterin (Mo-MPT) cofactor (Moco or molybdenum cofactor) to form Mo-molybdopterin guanine dinucleotide (Mo-MGD) cofactor. The sequence is that of Molybdenum cofactor guanylyltransferase from Rhodobacter capsulatus (Rhodopseudomonas capsulata).